The sequence spans 382 residues: Alkanesulfonate monooxygenase (382 aa).

It belongs to the SsuD family.

It carries out the reaction an alkanesulfonate + FMNH2 + O2 = an aldehyde + FMN + sulfite + H2O + 2 H(+). Catalyzes the desulfonation of aliphatic sulfonates. This Ectopseudomonas mendocina (strain ymp) (Pseudomonas mendocina) protein is Alkanesulfonate monooxygenase.